Consider the following 474-residue polypeptide: Trigger factor (474 aa).

The 86-residue stretch at 165-250 folds into the PPIase FKBP-type domain; the sequence is GDRVTIDYLG…VKTVSKPDEL (86 aa). A compositionally biased stretch (basic and acidic residues) spans 451–467; sequence VKKKTASDNKKSNEIKK. A disordered region spans residues 451–474; that stretch reads VKKKTASDNKKSNEIKKKSTMKKV.

This sequence belongs to the FKBP-type PPIase family. Tig subfamily.

It localises to the cytoplasm. The enzyme catalyses [protein]-peptidylproline (omega=180) = [protein]-peptidylproline (omega=0). In terms of biological role, involved in protein export. Acts as a chaperone by maintaining the newly synthesized protein in an open conformation. Functions as a peptidyl-prolyl cis-trans isomerase. The protein is Trigger factor of Bartonella bacilliformis (strain ATCC 35685 / KC583 / Herrer 020/F12,63).